The following is a 432-amino-acid chain: Tryptophan--tRNA ligase, cytoplasmic (432 aa).

The 'HIGH' region motif lies at Pro-111–His-120. The 'KMSKS' region motif lies at Lys-295–Ser-299.

The protein belongs to the class-I aminoacyl-tRNA synthetase family. Homodimer.

It is found in the cytoplasm. It catalyses the reaction tRNA(Trp) + L-tryptophan + ATP = L-tryptophyl-tRNA(Trp) + AMP + diphosphate + H(+). This is Tryptophan--tRNA ligase, cytoplasmic (WRS1) from Saccharomyces cerevisiae (strain ATCC 204508 / S288c) (Baker's yeast).